The primary structure comprises 213 residues: 5''-phosphoribostamycin phosphatase (213 aa).

Catalysis depends on H8, which acts as the Tele-phosphohistidine intermediate. The active site involves H155.

The protein belongs to the histidine phosphatase superfamily.

The enzyme catalyses 5''-phosphoribostamycin + H2O = ribostamycin + phosphate. It functions in the pathway antibiotic biosynthesis; butirosin biosynthesis. In terms of biological role, catalyzes dephosphorylation of 5''-phosphoribostamycin to generate ribostamycinin the biosynthetic pathway of butirosin. This chain is 5''-phosphoribostamycin phosphatase (btrP), found in Niallia circulans (Bacillus circulans).